The following is a 673-amino-acid chain: NACHT, LRR and PYD domains-containing protein 10 (673 aa).

One can recognise a Pyrin domain in the interval 1-92 (MALARANSPQ…VDYLNQVCLN (92 aa)). Positions 163–469 (PIVVMQGSAG…AMSFLVKEDQ (307 aa)) constitute an NACHT domain. An ATP-binding site is contributed by 169–176 (GSAGTGKT). The disordered stretch occupies residues 578-673 (SDKKKSVSVT…DGEMIDKMNG (96 aa)). The span at 584 to 597 (VSVTSSFSSGKVQS) shows a compositional bias: low complexity. Basic and acidic residues predominate over residues 633–648 (ASREKGHMEMNDKEDG). Residues 649–658 (GVEEQEDEEG) show a composition bias toward acidic residues. The span at 659-673 (QTLKKDGEMIDKMNG) shows a compositional bias: basic and acidic residues.

Belongs to the NLRP family. In terms of assembly, oligomerizes. Interacts with PYCARD. Also interacts with CASP1 and IL1B. Interacts with NOD1 and components of the NOD1 signaling pathway including RIPK2, NR2C2/TAK1 and IKBKG/NEMO. As to expression, expressed in skin, tongue, heart, colon and several cell lines of hematopoietic and myocytic origin but not in kidney, skeletal muscle, spleen, liver, lung, thymus, brain or small intestine (at protein level).

The protein resides in the cytoplasm. Its subcellular location is the cell membrane. Its function is as follows. Inhibits autoprocessing of CASP1, CASP1-dependent IL1B secretion, PYCARD aggregation and PYCARD-mediated apoptosis but not apoptosis induced by FAS or BID. Displays anti-inflammatory activity. Required for immunity against C.albicans infection. Involved in the innate immune response by contributing to pro-inflammatory cytokine release in response to invasive bacterial infection. Contributes to T-cell-mediated inflammatory responses in the skin. Plays a role in protection against periodontitis through its involvement in induction of IL1A via ERK activation in oral epithelial cells infected with periodontal pathogens. Exhibits both ATPase and GTPase activities. This Mus musculus (Mouse) protein is NACHT, LRR and PYD domains-containing protein 10 (Nlrp10).